Reading from the N-terminus, the 393-residue chain is Putative bacilysin exporter BacE (393 aa).

10 helical membrane passes run 11 to 31 (LLFGQALSFMGDYCVLPALLI), 43 to 63 (SGVIAVRSIPMVFQPFLGVLV), 69 to 89 (VKIMLWTDVIRGVIFLGLTFL), 92 to 112 (GEYPLLFLALLFVSYGSGVFF), 133 to 155 (LFAKATTISIIVGAAAGGLFLLG), 160 to 177 (LAVAFNGVTYLVSAFFIS), 215 to 235 (MFTMITMALLWGVVYSYFPIV), 244 to 264 (IGNFILTFCIGFGGFIGAALV), 287 to 307 (ALFLFTPIFAVSVIAAILFFI), and 353 to 373 (IVDAAVIMAFIVLLVSGLFLH).

It belongs to the major facilitator superfamily.

The protein resides in the cell membrane. Its function is as follows. Part of the bacilysin biosynthesis operon. May be involved in self-resistance to bacilysin by permitting efflux of this antibiotic. This is Putative bacilysin exporter BacE (bacE) from Bacillus subtilis.